Reading from the N-terminus, the 155-residue chain is Basic phospholipase A2 PC1 (155 aa).

The signal sequence occupies residues 1–21; that stretch reads MYPAHLLVLLAVCVSLLGASA. A propeptide spanning residues 22–27 is cleaved from the precursor; that stretch reads ISNRPR. 7 cysteine pairs are disulfide-bonded: C38–C98, C54–C144, C56–C72, C71–C125, C78–C118, C87–C111, and C105–C116. Positions 55, 57, and 59 each coordinate Ca(2+). The active site involves H75. D76 lines the Ca(2+) pocket. The active site involves D119.

It belongs to the phospholipase A2 family. Group I subfamily. D49 sub-subfamily. The cofactor is Ca(2+). In terms of tissue distribution, expressed by the venom gland.

The protein localises to the secreted. It catalyses the reaction a 1,2-diacyl-sn-glycero-3-phosphocholine + H2O = a 1-acyl-sn-glycero-3-phosphocholine + a fatty acid + H(+). Functionally, snake venom phospholipase A2 (PLA2) that inhibits neuromuscular transmission by blocking acetylcholine release from the nerve termini. PLA2 catalyzes the calcium-dependent hydrolysis of the 2-acyl groups in 3-sn-phosphoglycerides. This Laticauda colubrina (Yellow-lipped sea krait) protein is Basic phospholipase A2 PC1.